We begin with the raw amino-acid sequence, 117 residues long: Circadian clock oscillator protein KaiB (117 aa).

Belongs to the KaiB family. In terms of assembly, may undergo a major conformational rearrangment; in the free state forms homooligomers. When bound to KaiC switches to a monomeric thioredoxin-fold (KaiB(fs)). The active oscillator complex is probably KaiC(6):KaiB(6).

In terms of biological role, component of the KaiBC clock protein complex, which constitutes the main circadian regulator in cyanobacteria; it may modify the ATPase activity of KaiC. May be a metamorphic protein which reversibly switches between an inactive tetrameric fold and a rare, thioredoxin-like monomeric fold (KaiB(fs)). KaiB(fs) binds phospho-KaiC, and perhaps clock output effectors. The chain is Circadian clock oscillator protein KaiB from Prochlorococcus marinus (strain SARG / CCMP1375 / SS120).